A 295-amino-acid polypeptide reads, in one-letter code: Small ribosomal subunit protein uS2 (295 aa).

Residues 263-295 (KKFSKTKNIDEETNTEFEQALNDADENKNSDNA) form a disordered region.

It belongs to the universal ribosomal protein uS2 family.

The sequence is that of Small ribosomal subunit protein uS2 from Rickettsia massiliae (strain Mtu5).